Here is a 204-residue protein sequence, read N- to C-terminus: Proteasome subunit beta type-3 (204 aa).

Belongs to the peptidase T1B family. As to quaternary structure, the 26S proteasome consists of a 20S proteasome core and two 19S regulatory subunits. The 20S proteasome core is composed of 28 subunits that are arranged in four stacked rings, resulting in a barrel-shaped structure. The two end rings are each formed by seven alpha subunits, and the two central rings are each formed by seven beta subunits. The catalytic chamber with the active sites is on the inside of the barrel.

Its subcellular location is the cytoplasm. The protein localises to the nucleus. Non-catalytic component of the proteasome, a multicatalytic proteinase complex which is characterized by its ability to cleave peptides with Arg, Phe, Tyr, Leu, and Glu adjacent to the leaving group at neutral or slightly basic pH. The proteasome has an ATP-dependent proteolytic activity. This Picea mariana (Black spruce) protein is Proteasome subunit beta type-3 (PBC1).